The sequence spans 220 residues: Glutathione S-transferase 2 (220 aa).

Residues 2–88 (VVTLGYWDIR…YIARKHNMCG (87 aa)) form the GST N-terminal domain. Residues 7-8 (YW), 43-46 (PSDW), Lys-50, 59-60 (NL), and 72-73 (QS) each bind glutathione. A GST C-terminal domain is found at 90–208 (TEVEKQRVDV…RSGRFMKAPI (119 aa)). Tyr-116 serves as a coordination point for substrate.

It belongs to the GST superfamily. Mu family. In terms of assembly, homodimer.

It is found in the cytoplasm. The catalysed reaction is RX + glutathione = an S-substituted glutathione + a halide anion + H(+). Conjugation of reduced glutathione to a wide number of exogenous and endogenous hydrophobic electrophiles. Participates in the formation of novel hepoxilin regioisomers. In Gallus gallus (Chicken), this protein is Glutathione S-transferase 2 (GSTM2).